The primary structure comprises 288 residues: Tryptophan 2,3-dioxygenase (288 aa).

Substrate-binding positions include 57-61, Tyr119, and Arg123; that span reads FIIQH. His246 serves as a coordination point for heme. Thr260 provides a ligand contact to substrate.

The protein belongs to the tryptophan 2,3-dioxygenase family. In terms of assembly, homotetramer. The cofactor is heme.

The catalysed reaction is L-tryptophan + O2 = N-formyl-L-kynurenine. The protein operates within amino-acid degradation; L-tryptophan degradation via kynurenine pathway; L-kynurenine from L-tryptophan: step 1/2. Its function is as follows. Heme-dependent dioxygenase that catalyzes the oxidative cleavage of the L-tryptophan (L-Trp) pyrrole ring and converts L-tryptophan to N-formyl-L-kynurenine. Catalyzes the oxidative cleavage of the indole moiety. The polypeptide is Tryptophan 2,3-dioxygenase (Pseudomonas aeruginosa (strain UCBPP-PA14)).